We begin with the raw amino-acid sequence, 246 residues long: MFRYQVLIEYIGTNFVGWQIQSKGKSIQKEIQVKLSKFLKEKVVLIGSGRTDAGVHAIEQSAHFDCKKEIQNLDKLLKSINHFINDKGISVLAIKKRSLKFHARHSAKQRIYKYIIFNRLSKPSLEKERGWHIIKKLDIELMKKGSKKLLGTKDFSTFRASSCNAKSPIKTMKSVNIKSKDGRIEIQFKSQSFLQQQVRSMVGSLKYLAENKWDLKKFEFVIKSKKRILCAPPAPAEGLFLEKVIY.

Asp-52 serves as the catalytic Nucleophile. A substrate-binding site is contributed by Tyr-112.

This sequence belongs to the tRNA pseudouridine synthase TruA family. As to quaternary structure, homodimer.

The catalysed reaction is uridine(38/39/40) in tRNA = pseudouridine(38/39/40) in tRNA. Functionally, formation of pseudouridine at positions 38, 39 and 40 in the anticodon stem and loop of transfer RNAs. The chain is tRNA pseudouridine synthase A from Pelagibacter ubique (strain HTCC1062).